Consider the following 465-residue polypeptide: MEEEDEEARALLAGGPDEADRGAPAAPGALPALCDPSRLAHRLLVLLLMCFLGFGSYFCYDNPAALQTQVKRDMQVNTTKFMLLYAWYSWPNVVLCFFGGFLIDRVFGIRWGTIIFSCFVCIGQVVFALGGIFNAFWLMEFGRFVFGIGGESLAVAQNTYAVSWFKGKELNLVFGLQLSMARIGSTVNMNLMGWLYSKIEALLGSAGHTTLGITLMIGGITCILSLICALALAYLDQRAERILHKEQGKTGEVIKLTDVKDFSLPLWLIFIICVCYYVAVFPFIGLGKVFFTEKFGFSSQAASAINSVVYVISAPMSPVFGLLVDKTGKNIIWVLCAVAATLVSHMMLAFTMWNPWIAMCLLGLSYSLLACALWPMVAFVVPEHQLGTAYGFMQSIQNLGLAIISIIAGMILDSRGYLFLEVFFIACVSLSLLSVVLLYLVNRAQGGNLNYSARQREEIKFSHTE.

The segment at Met-1–Ala-23 is disordered. The Dileucine internalization motif motif lies at Leu-11–Leu-12. 12 helical membrane-spanning segments follow: residues Leu-39–Cys-59, Leu-83–Ile-103, Thr-113–Phe-133, Ala-135–Val-155, Leu-170–Leu-191, Ile-213–Ala-233, Leu-266–Leu-286, Ser-303–Leu-323, Ile-331–Thr-351, Leu-361–Val-381, Phe-392–Leu-412, and Leu-418–Leu-438.

It belongs to the major facilitator superfamily. As to quaternary structure, homodimer. Interacts with lysosomal protein GLMP (via lumenal domain); the interaction starts while both proteins are still in the endoplasmic reticulum and is required for stabilization of MFSD1 in lysosomes but has no direct effect on its targeting to lysosomes or transporter activity.

It is found in the lysosome membrane. It carries out the reaction L-alpha-aminoacyl-L-arginine(out) = L-alpha-aminoacyl-L-arginine(in). The enzyme catalyses L-arginyl-L-alpha-amino acid(out) = L-arginyl-L-alpha-amino acid(in). It catalyses the reaction L-arginyl-glycine(out) = L-arginyl-glycine(in). The catalysed reaction is L-alpha-aminoacyl-L-lysine(out) = L-alpha-aminoacyl-L-lysine(in). It carries out the reaction L-aspartyl-L-lysine(out) = L-aspartyl-L-lysine(in). The enzyme catalyses L-alanyl-L-lysine(out) = L-alanyl-L-lysine(in). It catalyses the reaction L-lysyl-L-alpha-amino acid(out) = L-lysyl-L-alpha-amino acid(in). The catalysed reaction is L-lysyl-L-alanine(out) = L-lysyl-L-alanine(in). It carries out the reaction L-lysyl-L-lysine(out) = L-lysyl-L-lysine(in). The enzyme catalyses L-lysyl-glycine(out) = L-lysyl-glycine(in). It catalyses the reaction L-alpha-aminoacyl-L-histidine(out) = L-alpha-aminoacyl-L-histidine(in). The catalysed reaction is L-histidyl-L-alpha-amino acid(out) = L-histidyl-L-alpha-amino acid(in). It carries out the reaction L-histidyl-glycine(out) = L-histidyl-glycine(in). Its function is as follows. Lysosomal dipeptide uniporter that selectively exports lysine, arginine or histidine-containing dipeptides with a net positive charge from the lysosome lumen into the cytosol. Could play a role in a specific type of protein O-glycosylation indirectly regulating macrophages migration and tissue invasion. Also essential for liver homeostasis. The chain is Lysosomal dipeptide transporter MFSD1 from Homo sapiens (Human).